The primary structure comprises 164 residues: Peptide deformylase-like (164 aa).

Glu133 is a catalytic residue.

Belongs to the polypeptide deformylase family.

This Agrobacterium fabrum (strain C58 / ATCC 33970) (Agrobacterium tumefaciens (strain C58)) protein is Peptide deformylase-like.